The sequence spans 166 residues: Calmodulin-like protein 5 (166 aa).

EF-hand domains follow at residues Glu-11 to Thr-46, Pro-47 to Arg-82, Ala-96 to Lys-131, and Leu-132 to Gln-166. The Ca(2+) site is built by Asp-24, Asp-26, Asp-28, Cys-30, Glu-35, Asp-60, Asp-62, Asn-64, Thr-66, Glu-71, Asp-109, Asp-111, Asp-113, and Glu-120. An N6,N6,N6-trimethyllysine modification is found at Lys-131. 5 residues coordinate Ca(2+): Asp-145, Asp-147, Asp-149, Gln-151, and Glu-156.

It belongs to the calmodulin family.

Potential calcium sensor. The protein is Calmodulin-like protein 5 (CML5) of Oryza sativa subsp. japonica (Rice).